The primary structure comprises 1757 residues: Serine/threonine-protein kinase WNK3 (1757 aa).

Residues 1-25 (MATDSGEPASTEDSEKPDGVSFENR) form a disordered region. A Phosphoserine modification is found at Ser-62. Basic and acidic residues predominate over residues 66–82 (TEDDKVAESSRRDERKA). Residues 66-85 (TEDDKVAESSRRDERKAATN) form a disordered region. Residues 146 to 404 (LKFDIELGRG…IKDLLNHAFF (259 aa)) enclose the Protein kinase domain. Residues 226 to 229 (TELM) and Lys-276 contribute to the ATP site. Asp-293 serves as the catalytic Proton acceptor. Phosphoserine; by autocatalysis occurs at positions 303 and 307. Residues 536 to 546 (EYEETEVDQHV) form an interaction with KLHL3 region. Thr-540 carries the phosphothreonine modification. 3 stretches are compositionally biased toward polar residues: residues 551 to 570 (LQGK…SSEP), 578 to 604 (SDTS…KLTQ), and 674 to 689 (SVKE…SGNG). Disordered stretches follow at residues 551-604 (LQGK…KLTQ) and 674-705 (SVKE…PRPE). Ser-1039 bears the Phosphoserine mark. The span at 1404–1422 (VATEKNVTSTTEVSVQSGS) shows a compositional bias: polar residues. 3 disordered regions span residues 1404–1440 (VATE…QTCT), 1479–1498 (SLFY…EIED), and 1536–1574 (ATKD…MTHS). Low complexity predominate over residues 1479–1491 (SLFYSPSSPMSSD). A phosphoserine mark is found at Ser-1550 and Ser-1553. The span at 1555–1566 (RRPRSFKSKLRS) shows a compositional bias: basic residues. Position 1595 is a phosphoserine (Ser-1595). 2 disordered regions span residues 1621–1650 (HFPS…CEST) and 1734–1757 (PGMN…PGPK). Residues 1624–1637 (SKPSLNQLKQSQQK) are compositionally biased toward low complexity. The span at 1641-1650 (ENWNKSCEST) shows a compositional bias: polar residues. Residues 1742–1757 (PAPPVQNPASIPPGPK) show a composition bias toward pro residues.

This sequence belongs to the protein kinase superfamily. Ser/Thr protein kinase family. WNK subfamily. Interacts with WNK1 and WNK4. The cofactor is Mg(2+). Post-translationally, autophosphorylated at Ser-303 and Ser-307, promoting its activity. Phosphorylation at Thr-540 prevents interaction with KLHL3 and subsequent ubiquitination and degradation by the BCR(KLHL3) complex. Ubiquitinated by the BCR(KLHL2) complex, leading to its degradation. Ubiquitinated by the BCR(KLHL3) complex, leading to its degradation. As to expression, expressed in pancreatic duct.

It is found in the cytoplasm. The catalysed reaction is L-seryl-[protein] + ATP = O-phospho-L-seryl-[protein] + ADP + H(+). It catalyses the reaction L-threonyl-[protein] + ATP = O-phospho-L-threonyl-[protein] + ADP + H(+). With respect to regulation, activated in response to hyperosmotic stress: cell shrinkage promotes formation of a membraneless compartment that concentrates WNK3 with its substrates, OXSR1/OSR1 and STK39/SPAK. Activation requires autophosphorylation of Ser-307 and, to a lower extent, Ser-303. Autophosphorylation and subsequent activation is inhibited by increases in intracellular ionic strength: Cl(-) potently inhibits WNK3 kinase activity via direct binding. Also inhibited by K(+) ions. Kinase activity is inhibited by WNK4. Its function is as follows. Serine/threonine-protein kinase component of the WNK3-SPAK/OSR1 kinase cascade, which plays an important role in the regulation of electrolyte homeostasis and regulatory volume increase in response to hyperosmotic stress. WNK3 mediates regulatory volume increase in response to hyperosmotic stress by acting as a molecular crowding sensor, which senses cell shrinkage and mediates formation of a membraneless compartment by undergoing liquid-liquid phase separation. The membraneless compartment concentrates WNK3 with its substrates, OXSR1/OSR1 and STK39/SPAK, promoting WNK3-dependent phosphorylation and activation of downstream kinases OXSR1/OSR1 and STK39/SPAK. Following activation, OXSR1/OSR1 and STK39/SPAK catalyze phosphorylation of ion cotransporters SLC12A1/NKCC2, SLC12A2/NKCC1, SLC12A3/NCC, SLC12A4/KCC1, SLC12A5/KCC2 or SLC12A6/KCC3, regulating their activity. Phosphorylation of Na-K-Cl cotransporters SLC12A2/NKCC1 and SLC12A2/NKCC1 promote their activation and ion influx; simultaneously, phosphorylation of K-Cl cotransporters SLC12A4/KCC1, SLC12A5/KCC2 and SLC12A6/KCC3 inhibits its activity, blocking ion efflux. Phosphorylates WNK4, possibly regulating the activity of SLC12A3/NCC. May also phosphorylate NEDD4L. Also acts as a scaffold protein independently of its protein kinase activity: negatively regulates cell membrane localization of various transporters and channels, such as KCNJ1 and SLC26A9. Increases Ca(2+) influx mediated by TRPV5 and TRPV6 by enhancing their membrane expression level via a kinase-dependent pathway. This Mus musculus (Mouse) protein is Serine/threonine-protein kinase WNK3.